The chain runs to 197 residues: Large ribosomal subunit protein uL18 (197 aa).

It belongs to the universal ribosomal protein uL18 family. In terms of assembly, part of the 50S ribosomal subunit. Contacts the 5S and 23S rRNAs.

Functionally, this is one of the proteins that bind and probably mediate the attachment of the 5S RNA into the large ribosomal subunit, where it forms part of the central protuberance. The chain is Large ribosomal subunit protein uL18 from Sulfolobus acidocaldarius (strain ATCC 33909 / DSM 639 / JCM 8929 / NBRC 15157 / NCIMB 11770).